Consider the following 369-residue polypeptide: Beta-1,3-galactosyltransferase 9 (369 aa).

The Cytoplasmic segment spans residues 1–12; sequence MQVTFCRLRTHQ. Residues 13-33 form a helical; Signal-anchor for type II membrane protein membrane-spanning segment; it reads WCFILFNVILFHALLFGTDFV. The Lumenal segment spans residues 34 to 369; the sequence is EEYFLHSLPY…IKNNLMYFAD (336 aa). Residues Asn66, Asn96, and Asn109 are each glycosylated (N-linked (GlcNAc...) asparagine).

It belongs to the glycosyltransferase 31 family.

The protein resides in the golgi apparatus membrane. Putative glycosyltransferase that could catalyze the transfer of galactose residues from UDP-alpha-D-galactose. This is Beta-1,3-galactosyltransferase 9 from Homo sapiens (Human).